The sequence spans 78 residues: Defensin-like protein 74 (78 aa).

Residues 1–28 form the signal peptide; that stretch reads MNYKIGIMSLLVITSIIFLFLVPDKVEA. Cystine bridges form between Cys32-Cys73, Cys36-Cys58, Cys42-Cys71, and Cys46-Cys72.

This sequence belongs to the DEFL family.

The protein localises to the secreted. The chain is Defensin-like protein 74 (LCR43) from Arabidopsis thaliana (Mouse-ear cress).